Here is a 560-residue protein sequence, read N- to C-terminus: MSTENNAPVVNNFIRSIIDEDLATGRRSSVVTRFPPEPNGFAHIGHAKAICINFGLAEDYNGQCNLRMDDTNPEKESDEFVEAFKQDISWLGFKWNGEVRYASDYFDRLYDYAVELIQAGKAYVDDLSAEEMRQYRGNLTEPGKNSPYRDRTPEENLDLFTRMKNGEFPDGSKTLRLKIDMASGNINLRDPAIYRIRRVHHHRTGDKWCIYPMYDYTHCISDAIEGITHSLCSLEFEDHRPLYDWVLDNISIEHHPQQIEFSRLELLYALTSKRKLQALVNDGAVTGWDDPRMPTIAGMRRRGYSPAGIKLFAQRIGVSKSENIIDMAILEGAVRETLENDSPRVMAVVNPLKVTLTNYDAAVTASRSAPFHPHHPEFGERDVPIAREIWIERDDFAETPPPKWQRLTAGGEVRLRYSYVIKCDEVVKDAADEIVELKCSIDHDTLGKNPEGRKVKGVIHWVSAEHAIQADVRWYERLFTEQRPDAVRGEDGEYVDFRQFLNPESLKLVPAYVEASVLQAEPESRFQFERLGYFVTDRYEHRKGDKAVFNRTVGLKDSWK.

The 'HIGH' region signature appears at 36-46 (PEPNGFAHIGH). ATP is bound by residues 37–39 (EPN) and 43–49 (HIGHAKA). Residues Asp-69 and Tyr-214 each coordinate L-glutamine. 263 to 264 (RL) contacts ATP. Positions 270 to 274 (LTSKR) match the 'KMSKS' region motif.

The protein belongs to the class-I aminoacyl-tRNA synthetase family. As to quaternary structure, monomer.

It localises to the cytoplasm. The catalysed reaction is tRNA(Gln) + L-glutamine + ATP = L-glutaminyl-tRNA(Gln) + AMP + diphosphate. This Chromobacterium violaceum (strain ATCC 12472 / DSM 30191 / JCM 1249 / CCUG 213 / NBRC 12614 / NCIMB 9131 / NCTC 9757 / MK) protein is Glutamine--tRNA ligase.